The sequence spans 503 residues: Proton-coupled zinc antiporter SLC30A1 (503 aa).

Over 1-10 the chain is Cytoplasmic; it reads MGCWGRNRGR. A helical transmembrane segment spans residues 11-31; it reads LLCMLLLTFMFMVLEVVVSRV. Residues 32-35 lie on the Extracellular side of the membrane; the sequence is TASL. A helical transmembrane segment spans residues 36–56; sequence AMLSDSFHMLSDVLALVVALV. Residues His43 and Asp47 each coordinate Zn(2+). Residues 57-78 lie on the Cytoplasmic side of the membrane; the sequence is AERFARRTHATQKNTFGWIRAE. A helical transmembrane segment spans residues 79–99; it reads VMGALVNAIFLTGLCFAILLE. Over 100–113 the chain is Extracellular; sequence AVERFIEPHEMQQP. The chain crosses the membrane as a helical span at residues 114-134; sequence LVVLSVGVAGLLVNVLGLCLF. The Cytoplasmic segment spans residues 135-243; sequence HHHSGEGQGA…RAGQLNMRGV (109 aa). Residues 140-213 are disordered; it reads EGQGAGHGHS…PEKLRSDDPV (74 aa). Positions 145–156 are 6 X 2 AA approximate repeats of H-G; sequence GHGHSHGHGHGH. Residues 147–165 are compositionally biased toward basic residues; sequence GHSHGHGHGHLAKGARKAG. Polar residues predominate over residues 184–196; the sequence is TNTLVANTSNSNG. Residues 200 to 211 show a composition bias toward basic and acidic residues; the sequence is DQAEPEKLRSDD. The helical transmembrane segment at 244-264 threads the bilayer; the sequence is FLHVLGDALGSVIVVVNALVF. Zn(2+) is bound by residues His246 and Asp250. Topologically, residues 265-303 are extracellular; sequence YFNWKGCTEDDFCTNPCFPDPCKSSVEIINSTQAPMRDA. Asn294 is a glycosylation site (N-linked (GlcNAc...) asparagine). Residues 304-324 form a helical membrane-spanning segment; sequence GPCWVLYLDPTLCIIMVCILL. The Cytoplasmic portion of the chain corresponds to 325–503; the sequence is YTTYPLLKES…VPNKQPESSL (179 aa). Ser502 is modified (phosphoserine).

It belongs to the cation diffusion facilitator (CDF) transporter (TC 2.A.4) family. SLC30A subfamily. Homodimer. Interacts with TMEM163. Interacts and forms a complex with TMC6 and TMC8; the interaction regulates zinc transport into the ER. Widely expressed.

Its subcellular location is the cell membrane. The protein resides in the basolateral cell membrane. The protein localises to the cytoplasmic vesicle membrane. It localises to the cytoplasm. It is found in the endoplasmic reticulum membrane. Its subcellular location is the golgi apparatus membrane. The protein resides in the nucleus membrane. The enzyme catalyses Zn(2+)(in) + 2 H(+)(out) = Zn(2+)(out) + 2 H(+)(in). Functionally, zinc ion:proton antiporter that could function at the plasma membrane mediating zinc efflux from cells against its electrochemical gradient protecting them from intracellular zinc accumulation and toxicity. Alternatively, could prevent the transport to the plasma membrane of CACNB2, the L-type calcium channels regulatory subunit, through a yet to be defined mechanism. By modulating the expression of these channels at the plasma membrane, could prevent calcium and zinc influx into cells. By the same mechanism, could also prevent L-type calcium channels-mediated heavy metal influx into cells. In some cells, could also function as a zinc ion:proton antiporter mediating zinc entry into the lumen of cytoplasmic vesicles. In macrophages, can increase zinc ions concentration into the lumen of cytoplasmic vesicles containing engulfed bacteria and could help inactivate them. Forms a complex with TMC6/EVER1 and TMC8/EVER2 at the ER membrane of keratynocytes which facilitates zinc uptake into the ER. Down-regulates the activity of transcription factors induced by zinc and cytokines. This Mus musculus (Mouse) protein is Proton-coupled zinc antiporter SLC30A1.